A 986-amino-acid chain; its full sequence is Leucine-rich repeat receptor-like kinase protein HAR1 (986 aa).

The signal sequence occupies residues 1–25; the sequence is MRIRVSYLLVLCFTLIWFRWTVVYS. LRR repeat units follow at residues 71–97, 98–121, 123–145, 146–170, 171–196, 198–218, 243–267, 268–291, 293–314, 316–339, 340–363, 365–387, 388–411, 412–435, 437–458, 459–482, 483–506, 508–530, 531–554, 555–578, and 579–603; these read DQNLRVVALNVTLVPLFGHLPPEIGLL, EKLENLTISMNNLTDQLPSDLASL, SLKVLNISHNLFSGQFPGNITVG, MTELEALDAYDNSFSGPLPEEIVKL, EKLKYLHLAGNYFSGTIPESYSEFQS, EFLGLNANSLTGRVPESLAKL, MENLRLLEMANCNLTGEIPPSLGNL, TKLHSLFVQMNNLTGTIPPELSSM, SLMSLDLSINDLTGEIPESFSK, KNLTLMNFFQNKFRGSLPSFIGDL, PNLETLQVWENNFSFVLPHNLGGN, RFLYFDVTKNHLTGLIPPDLCKS, GRLKTFIITDNFFRGPIPKGIGEC, RSLTKIRVANNFLDGPVPPGVFQL, SVTITELSNNRLNGELPSVISG, ESLGTLTLSNNLFTGKIPAAMKNL, RALQSLSLDANEFIGEIPGGVFEI, MLTKVNISGNNLTGPIPTTITHR, ASLTAVDLSRNNLAGEVPKGMKNL, MDLSILNLSRNEISGPVPDEIRFM, and TSLTTLDLSSNNFTGTVPTGGQFLV. Residues Asn-80, Asn-102, Asn-109, Asn-128, and Asn-141 are each glycosylated (N-linked (GlcNAc...) asparagine). N-linked (GlcNAc...) asparagine glycosylation is found at Asn-255, Asn-266, and Asn-279. Asn-317 and Asn-351 each carry an N-linked (GlcNAc...) asparagine glycan. Asn-513 and Asn-518 each carry an N-linked (GlcNAc...) asparagine glycan. Residues Asn-561 and Asn-590 are each glycosylated (N-linked (GlcNAc...) asparagine). The chain crosses the membrane as a helical span at residues 645–665; sequence IVIGIALATAVLLVAVTVHVV. Residues 695–971 enclose the Protein kinase domain; that stretch reads LKEENIIGKG…TMREVVHMLT (277 aa). Residues 701 to 709 and Lys-723 each bind ATP; that span reads IGKGGAGIV. The active-site Proton acceptor is the Asp-820.

It belongs to the protein kinase superfamily. Ser/Thr protein kinase family. As to expression, expressed in roots, leaves, stems and flowers.

The protein resides in the cell membrane. It carries out the reaction L-seryl-[protein] + ATP = O-phospho-L-seryl-[protein] + ADP + H(+). It catalyses the reaction L-threonyl-[protein] + ATP = O-phospho-L-threonyl-[protein] + ADP + H(+). Its function is as follows. LRR receptor kinase involved in the regulation of root and shoot growth, and root nodule organogenesis. Involved in long distance nodulation signaling events. Involved in the autoregulation of nodulation (AON), a long distance systemic signaling from root to shoot and back again, which allows legumes to limit the number of root nodules formed based on available nitrogen and previous rhizobial colonization. Acts from shoot to root to control AON. Involved in the regulation of root colonization by arbuscular mycorrhizal (AM) fungi. The sequence is that of Leucine-rich repeat receptor-like kinase protein HAR1 from Lotus japonicus (Lotus corniculatus var. japonicus).